A 778-amino-acid chain; its full sequence is Ent-sandaracopimaradiene synthase KSL3, chloroplastic (778 aa).

The transit peptide at 1-35 (MLLTSTNTLKISSQRKEWEAKDLTGMFHGQVNGRV) directs the protein to the chloroplast. D527, E531, N670, D671, and D678 together coordinate Mg(2+). The DDXXD motif signature appears at 527–531 (DDFFE).

Belongs to the terpene synthase family. It depends on Mg(2+) as a cofactor.

It localises to the plastid. The protein resides in the chloroplast. The enzyme catalyses ent-copalyl diphosphate = ent-sandaracopimara-8(14),15-diene + diphosphate. It carries out the reaction ent-copalyl diphosphate = ent-(12E)-labda-8(17),12,14-triene + diphosphate. It functions in the pathway secondary metabolite biosynthesis; terpenoid biosynthesis. Diterpene cyclase involved in the biosynthesis of labdane-related diterpenoids (LRDs) natural products. Catalyzes the cyclization of ent-CDP into ent-sandaracopimaradiene as a major, and ent-pimaradiene and ent-labdatriene as minor products. This Ricinus communis (Castor bean) protein is Ent-sandaracopimaradiene synthase KSL3, chloroplastic.